The chain runs to 539 residues: Laccase-1 (539 aa).

The N-terminal stretch at 1–21 (MAFTAISLFLAALGVINTAFA) is a signal peptide. Plastocyanin-like domains follow at residues 37–154 (AEVN…YDPE) and 166–309 (ESTV…HYLG). Residue N78 is glycosylated (N-linked (GlcNAc...) asparagine). Cu cation-binding residues include H88 and H90. 2 disulfide bridges follow: C109/C513 and C141/C228. The N-linked (GlcNAc...) asparagine glycan is linked to N120. H133 and H135 together coordinate Cu cation. 8 N-linked (GlcNAc...) asparagine glycosylation sites follow: N202, N233, N240, N293, N318, N353, N385, and N405. A Plastocyanin-like 3 domain is found at 374 to 495 (SPTVPVLLQI…GFAVVMAEDP (122 aa)). H421, H424, and H426 together coordinate Cu cation. A glycan (N-linked (GlcNAc...) asparagine) is linked at N457. Residues H476, C477, H478, and H482 each coordinate Cu cation. N-linked (GlcNAc...) asparagine glycosylation is present at N532.

It belongs to the multicopper oxidase family. The cofactor is Cu cation.

It localises to the secreted. It carries out the reaction 4 hydroquinone + O2 = 4 benzosemiquinone + 2 H2O. Its activity is regulated as follows. Inhibited by chloride ions. Inhibited by citrate. Inhibited by oxalate. Activated by acetate. Its function is as follows. In vitro, has activity towards 2,2'-azino-bis(3-ethylbenzthiazoline-6-sulfonic acid) (ABTS), 2,6-dimethoxy-phenol, and guaiacol. Although brown rot fungi preferentially degrade hemicellulose and cellulose, the enzyme may contribute to generating small amounts of lignin breakdown products required for catalytic reactions. The polypeptide is Laccase-1 (Fomitopsis schrenkii (Brown rot fungus)).